The primary structure comprises 137 residues: Proofreading thioesterase EntH (137 aa).

The active-site Nucleophile or proton acceptor is E63.

This sequence belongs to the thioesterase PaaI family. As to quaternary structure, homotetramer. Dimer of dimers. Interacts specifically with the aryl carrier protein (ArCP) domain of EntB.

It is found in the cytoplasm. The protein operates within siderophore biosynthesis; enterobactin biosynthesis. Required for optimal enterobactin synthesis. Acts as a proofreading enzyme that prevents EntB misacylation by hydrolyzing the thioester bound existing between EntB and wrongly charged molecules. This chain is Proofreading thioesterase EntH (entH), found in Klebsiella pneumoniae subsp. pneumoniae (strain ATCC 700721 / MGH 78578).